The chain runs to 299 residues: Ribonuclease 3-like protein 3 (299 aa).

One can recognise an RNase III domain in the interval Val-39–Asn-183. Residues Glu-79, Asp-169, and Glu-172 each contribute to the Mg(2+) site. Positions His-209–Glu-273 constitute a DRBM domain. Positions Thr-274 to Ser-299 are disordered. Positions Leu-275–Phe-291 are enriched in polar residues.

It depends on Mg(2+) as a cofactor. The cofactor is Mn(2+).

Cleaves double-stranded RNA (dsRNA). In Oryza sativa subsp. japonica (Rice), this protein is Ribonuclease 3-like protein 3.